The following is a 74-amino-acid chain: Small ribosomal subunit protein uS15 (74 aa).

The protein belongs to the universal ribosomal protein uS15 family. In terms of assembly, part of the 30S ribosomal subunit. Forms a bridge to the 50S subunit in the 70S ribosome, contacting the 23S rRNA.

Functionally, one of the primary rRNA binding proteins, it binds directly to 16S rRNA where it helps nucleate assembly of the platform of the 30S subunit by binding and bridging several RNA helices of the 16S rRNA. In terms of biological role, forms an intersubunit bridge (bridge B4) with the 23S rRNA of the 50S subunit in the ribosome. In Onion yellows phytoplasma (strain OY-M), this protein is Small ribosomal subunit protein uS15.